Here is a 215-residue protein sequence, read N- to C-terminus: Cytochrome b6 (215 aa).

Residues 32-52 (IFYCLGGITLTCFLVQVATGF) traverse the membrane as a helical segment. Residue Cys-35 participates in heme c binding. Heme b contacts are provided by His-86 and His-100. A run of 3 helical transmembrane segments spans residues 90–110 (ASMMVLMMILHVFRVYLTGGF), 116–136 (LTWITGVILAVLTVSFGVTGY), and 186–206 (LHTFVLPLLTAVFMLMHFLMI). The heme b site is built by His-187 and His-202.

The protein belongs to the cytochrome b family. PetB subfamily. As to quaternary structure, the 4 large subunits of the cytochrome b6-f complex are cytochrome b6, subunit IV (17 kDa polypeptide, PetD), cytochrome f and the Rieske protein, while the 4 small subunits are PetG, PetL, PetM and PetN. The complex functions as a dimer. It depends on heme b as a cofactor. The cofactor is heme c.

The protein localises to the plastid. The protein resides in the chloroplast thylakoid membrane. Component of the cytochrome b6-f complex, which mediates electron transfer between photosystem II (PSII) and photosystem I (PSI), cyclic electron flow around PSI, and state transitions. This Psilotum nudum (Whisk fern) protein is Cytochrome b6.